The chain runs to 485 residues: Glutathione gamma-glutamylcysteinyltransferase 1 (485 aa).

Residues 1 to 221 enclose the Peptidase C83 domain; that stretch reads MAMASLYRRS…GFMLISRPHR (221 aa). Residues Cys-56, His-162, and Asp-180 contribute to the active site.

It belongs to the phytochelatin synthase family. Expressed in roots and shoots.

The enzyme catalyses [Glu(-Cys)](n)-Gly + glutathione + H(+) = [Glu(-Cys)](n+1)-Gly + glycine. Requires cadmium for activity. Also activated in vitro or in heterologous system by Ag(+), Hg(+), Zn(2+), Cu(2+), Fe(2+) or Fe(3+) ions, but not by Co(2+) or Ni(2+) ions. Functionally, involved in the synthesis of phytochelatins (PC) and homophytochelatins (hPC), the heavy-metal-binding peptides of plants. Also involved in glutathione-conjugates degradation. This Arabidopsis thaliana (Mouse-ear cress) protein is Glutathione gamma-glutamylcysteinyltransferase 1 (PCS1).